Consider the following 389-residue polypeptide: Chalcone synthase 1 (389 aa).

Cys164 is an active-site residue.

The protein belongs to the thiolase-like superfamily. Chalcone/stilbene synthases family.

It carries out the reaction (E)-4-coumaroyl-CoA + 3 malonyl-CoA + 3 H(+) = 2',4,4',6'-tetrahydroxychalcone + 3 CO2 + 4 CoA. The protein operates within secondary metabolite biosynthesis; flavonoid biosynthesis. In terms of biological role, the primary product of this enzyme is 4,2',4',6'-tetrahydroxychalcone (also termed naringenin-chalcone or chalcone) which can under specific conditions spontaneously isomerize into naringenin. In Daucus carota (Wild carrot), this protein is Chalcone synthase 1 (CHS1).